The primary structure comprises 504 residues: Glucose-6-phosphate isomerase (504 aa).

Glutamate 333 serves as the catalytic Proton donor. Catalysis depends on residues histidine 364 and lysine 473.

The protein belongs to the GPI family.

Its subcellular location is the cytoplasm. It catalyses the reaction alpha-D-glucose 6-phosphate = beta-D-fructose 6-phosphate. Its pathway is carbohydrate biosynthesis; gluconeogenesis. It participates in carbohydrate degradation; glycolysis; D-glyceraldehyde 3-phosphate and glycerone phosphate from D-glucose: step 2/4. In terms of biological role, catalyzes the reversible isomerization of glucose-6-phosphate to fructose-6-phosphate. This Xanthomonas axonopodis pv. citri (strain 306) protein is Glucose-6-phosphate isomerase.